The chain runs to 104 residues: Large ribosomal subunit protein uL24 (104 aa).

The protein belongs to the universal ribosomal protein uL24 family. Part of the 50S ribosomal subunit.

One of two assembly initiator proteins, it binds directly to the 5'-end of the 23S rRNA, where it nucleates assembly of the 50S subunit. Its function is as follows. One of the proteins that surrounds the polypeptide exit tunnel on the outside of the subunit. This chain is Large ribosomal subunit protein uL24, found in Pectobacterium carotovorum subsp. carotovorum (strain PC1).